A 54-amino-acid polypeptide reads, in one-letter code: Potassium channel toxin alpha-KTx 14.1 (54 aa).

The first 23 residues, 1 to 23, serve as a signal peptide directing secretion; that stretch reads MKIFFAILLILAVCSMAIWTVNG.

It belongs to the short scorpion toxin superfamily. Potassium channel inhibitor family. Alpha-KTx 14 subfamily. In terms of processing, probably has three disulfide bridges. Expressed by the venom gland.

It localises to the secreted. In terms of biological role, potential blocker of potassium channels. This is Potassium channel toxin alpha-KTx 14.1 from Olivierus martensii (Manchurian scorpion).